We begin with the raw amino-acid sequence, 171 residues long: S-ribosylhomocysteine lyase (171 aa).

Fe cation contacts are provided by histidine 54, histidine 58, and cysteine 128.

Belongs to the LuxS family. As to quaternary structure, homodimer. Fe cation is required as a cofactor.

It carries out the reaction S-(5-deoxy-D-ribos-5-yl)-L-homocysteine = (S)-4,5-dihydroxypentane-2,3-dione + L-homocysteine. Its function is as follows. Involved in the synthesis of autoinducer 2 (AI-2) which is secreted by bacteria and is used to communicate both the cell density and the metabolic potential of the environment. The regulation of gene expression in response to changes in cell density is called quorum sensing. Catalyzes the transformation of S-ribosylhomocysteine (RHC) to homocysteine (HC) and 4,5-dihydroxy-2,3-pentadione (DPD). This Pectobacterium atrosepticum (strain SCRI 1043 / ATCC BAA-672) (Erwinia carotovora subsp. atroseptica) protein is S-ribosylhomocysteine lyase.